A 509-amino-acid polypeptide reads, in one-letter code: Ethanolamine-phosphate phospho-lyase (509 aa).

The residue at position 279 (Lys-279) is an N6-(pyridoxal phosphate)lysine. Positions 451–474 (EKTSAKRKVHNENSGDTNAKEKET) are enriched in basic and acidic residues. Residues 451-509 (EKTSAKRKVHNENSGDTNAKEKETCSSNSQERNPNDHAYRQSNGLHPESPTFTRKRIRT) form a disordered region.

The protein belongs to the class-III pyridoxal-phosphate-dependent aminotransferase family. Homotetramer. It depends on pyridoxal 5'-phosphate as a cofactor.

It localises to the mitochondrion. The catalysed reaction is phosphoethanolamine + H2O = acetaldehyde + NH4(+) + phosphate. Its function is as follows. Catalyzes the pyridoxal-phosphate-dependent breakdown of phosphoethanolamine, converting it to ammonia, inorganic phosphate and acetaldehyde. The protein is Ethanolamine-phosphate phospho-lyase (etnppl) of Xenopus laevis (African clawed frog).